The chain runs to 298 residues: MQDFSSLLLKLQEYWKNQGCLVIQPYDIPAGAGTFHPATLLRSLDKKPWNVAYVAPSRRPTDGRYGENPNRLGSYYQFQVVIKPSPSNIQELYLKSLEVLGINLKEHDIRFVEDNWESPTLGAWGLGWEVWLDGMEVTQFTYFQQVGGIACNPIPVEITYGLERLAMYVQKVENILEIEWAKKNHDSVNYAQVHLESEYEFSKYHFEIASVKRLLEMFKNAQAEALHCLENKLPLPAYDFVMLCSHFFNILDARKAISVAERQNYILQIRDLTKGCAILYKEQEEEREERLKNALTKA.

The protein belongs to the class-II aminoacyl-tRNA synthetase family. As to quaternary structure, tetramer of two alpha and two beta subunits.

It localises to the cytoplasm. The catalysed reaction is tRNA(Gly) + glycine + ATP = glycyl-tRNA(Gly) + AMP + diphosphate. In Helicobacter pylori (strain Shi470), this protein is Glycine--tRNA ligase alpha subunit.